Reading from the N-terminus, the 278-residue chain is MDMAADIASDHFISRRVDIGRITLNVREKGSGPLMLFFHGITSNSAVFEPLMIRLSDRFTTIAVDQRGHGLSDKPETGYEANDYADDIAGLIRTLARGHAILVGHSLGARNSVTAAAKYPDLVRSVVAIDFTPYIETEALDALEARVNAGSQLFEDIKAVEAYLAGRYPNIPADAIRIRAESGYQPVDGGLRPLASSAAMAQTARGLRSDLVPAYRDVTKPVLIVRGESSKLVSAAALAKTSRLRPDLPVVVVPGADHYVNEVSPEITLKAITNFIDA.

Chloride contacts are provided by residues Ile-41 and 106-107 (SL). Residue Ser-106 is the Nucleophile of the active site. Residues Asp-130 and His-258 contribute to the active site.

It belongs to the AB hydrolase superfamily. Homodimer.

It catalyses the reaction 2-(acetamidomethylene)succinate + 2 H2O + H(+) = succinate semialdehyde + acetate + NH4(+) + CO2. The protein operates within cofactor degradation; B6 vitamer degradation. Catalyzes the final reaction in the degradation of vitamin B6 from (E)-2-(acetamidomethylene)succinate (E-2AMS) to produce succinic semialdehyde, acetate, ammonia and carbon dioxide. This chain is 2-(acetamidomethylene)succinate hydrolase, found in Mesorhizobium japonicum (strain LMG 29417 / CECT 9101 / MAFF 303099) (Mesorhizobium loti (strain MAFF 303099)).